Reading from the N-terminus, the 369-residue chain is Phosphoribosyl pyrophosphate synthase-associated protein 2 (369 aa).

Methionine 1 carries the post-translational modification N-acetylmethionine. Phosphoserine occurs at positions 219, 227, and 233.

This sequence belongs to the ribose-phosphate pyrophosphokinase family. As to quaternary structure, binds to PRPS1 and PRPS2. In terms of tissue distribution, ubiquitous.

Seems to play a negative regulatory role in 5-phosphoribose 1-diphosphate synthesis. The chain is Phosphoribosyl pyrophosphate synthase-associated protein 2 (Prpsap2) from Rattus norvegicus (Rat).